We begin with the raw amino-acid sequence, 124 residues long: Small ribosomal subunit protein uS12 (124 aa).

Asp89 bears the 3-methylthioaspartic acid mark.

It belongs to the universal ribosomal protein uS12 family. Part of the 30S ribosomal subunit. Contacts proteins S8 and S17. May interact with IF1 in the 30S initiation complex.

In terms of biological role, with S4 and S5 plays an important role in translational accuracy. Its function is as follows. Interacts with and stabilizes bases of the 16S rRNA that are involved in tRNA selection in the A site and with the mRNA backbone. Located at the interface of the 30S and 50S subunits, it traverses the body of the 30S subunit contacting proteins on the other side and probably holding the rRNA structure together. The combined cluster of proteins S8, S12 and S17 appears to hold together the shoulder and platform of the 30S subunit. This Photobacterium profundum (strain SS9) protein is Small ribosomal subunit protein uS12.